A 490-amino-acid polypeptide reads, in one-letter code: Betaine aldehyde dehydrogenase (490 aa).

Aspartate 93 provides a ligand contact to K(+). Residue 150-152 (GAW) coordinates NAD(+). The active-site Charge relay system is lysine 162. 176–179 (KPSE) is an NAD(+) binding site. Valine 180 serves as a coordination point for K(+). 230–233 (GIAS) contacts NAD(+). Leucine 246 serves as a coordination point for K(+). The active-site Proton acceptor is glutamate 252. NAD(+) is bound by residues glycine 254, cysteine 286, and glutamate 387. Catalysis depends on cysteine 286, which acts as the Nucleophile. At cysteine 286 the chain carries Cysteine sulfenic acid (-SOH). K(+) contacts are provided by lysine 457 and glycine 460. Catalysis depends on glutamate 464, which acts as the Charge relay system.

Belongs to the aldehyde dehydrogenase family. Dimer of dimers. It depends on K(+) as a cofactor.

The catalysed reaction is betaine aldehyde + NAD(+) + H2O = glycine betaine + NADH + 2 H(+). It functions in the pathway amine and polyamine biosynthesis; betaine biosynthesis via choline pathway; betaine from betaine aldehyde: step 1/1. Involved in the biosynthesis of the osmoprotectant glycine betaine. Catalyzes the irreversible oxidation of betaine aldehyde to the corresponding acid. The chain is Betaine aldehyde dehydrogenase from Yersinia pestis.